Reading from the N-terminus, the 125-residue chain is MADLQKIVDDLSALTVLEAAELAKLLEEKWGVSAAAAVAVAAPGAGGAAAAPAEEKTEFTVVLASAGDKKIEVIKEVRAITGLGLKEAKDLVEGAPKPVKEGVNKDEAEKIKGQLEKAGAKVELK.

The protein belongs to the bacterial ribosomal protein bL12 family. Homodimer. Part of the ribosomal stalk of the 50S ribosomal subunit. Forms a multimeric L10(L12)X complex, where L10 forms an elongated spine to which 2 to 4 L12 dimers bind in a sequential fashion. Binds GTP-bound translation factors.

Forms part of the ribosomal stalk which helps the ribosome interact with GTP-bound translation factors. Is thus essential for accurate translation. The sequence is that of Large ribosomal subunit protein bL12 from Bradyrhizobium sp. (strain BTAi1 / ATCC BAA-1182).